Reading from the N-terminus, the 481-residue chain is Protein hedgehog (481 aa).

A lipid anchor (N-palmitoyl cysteine) is attached at Cys-93. Ca(2+) contacts are provided by Glu-157, Glu-158, Asp-163, Thr-193, Glu-194, Asp-197, and Asp-199. Gly-265 carries Cholesterol glycine ester lipidation.

This sequence belongs to the hedgehog family. In terms of assembly, interacts with shf. The C-terminal part of the hedgehog protein precursor displays an autoproteolysis activity that results in the cleavage of the full-length protein into two parts (N-product and C-product). In addition, the C-terminal part displays a cholesterol transferase activity that results by the covalent attachment of a cholesterol moiety to the C-terminal of the newly generated N-product. The N-product is the active species in both local and long-range signaling, whereas the C-product has no signaling activity. In terms of processing, cholesterylation is required for N-product targeting to lipid rafts and multimerization. Post-translationally, N-palmitoylation by Rasp of the hedgehog N-product, within the secretory pathway, is required for the embryonic and larval patterning activities of the hedgehog signal.

The protein resides in the nucleus. It is found in the cytoplasm. It localises to the cell membrane. The enzyme catalyses glycyl-L-cysteinyl-[protein] + cholesterol + H(+) = [protein]-C-terminal glycyl cholesterol ester + N-terminal L-cysteinyl-[protein]. Functionally, the C-terminal part of the hedgehog protein precursor displays an autoproteolysis activity that results in the cleavage of the full-length protein into two parts (N-product and C-product). In addition, the C-terminal part displays a cholesterol transferase activity that results by the covalent attachment of a cholesterol moiety to the C-terminal of the newly generated N-product. Once cleaved, the C-product has no signaling activity and diffuses from the cell. In terms of biological role, the dually lipidated hedgehog protein N-product is a morphogen which is essential for a variety of patterning events during development. Establishes the anterior-posterior axis of the embryonic segments and patterns the larval imaginal disks. Binds to the patched (ptc) receptor, which functions in association with smoothened (smo), to activate the transcription of target genes wingless (wg), decapentaplegic (dpp) and ptc. In the absence of hh, ptc represses the constitutive signaling activity of smo through fused (fu). Essential component of a signaling pathway which regulates the Duox-dependent gut immune response to bacterial uracil; required to activate Cad99C-dependent endosome formation, norpA-dependent Ca2+ mobilization and p38 MAPK, which are essential steps in the Duox-dependent production of reactive oxygen species (ROS) in response to intestinal bacterial infection. During photoreceptor differentiation, it up-regulates transcription of Ubr3, which in turn promotes the hh-signaling pathway by mediating the ubiquitination and degradation of cos. This chain is Protein hedgehog, found in Drosophila persimilis (Fruit fly).